The following is an 803-amino-acid chain: Chromatin structure-remodeling complex subunit rsc1 (803 aa).

The Bromo 1 domain occupies Ala-9–Phe-117. The segment covering Trp-128–Asn-154 has biased composition (polar residues). A disordered region spans residues Trp-128–Lys-160. Ser-168 is subject to Phosphoserine. Residues Glu-174–Lys-206 form a disordered region. The span at Asp-178 to Lys-197 shows a compositional bias: basic and acidic residues. The region spanning Lys-206–Glu-316 is the Bromo 2 domain. Phosphoserine is present on residues Ser-331 and Ser-334. The BAH domain maps to Thr-351–Lys-469. The span at Gly-512–Met-525 shows a compositional bias: polar residues. The interval Gly-512–Ile-616 is disordered. The span at Leu-526–Ser-539 shows a compositional bias: low complexity. Composition is skewed to polar residues over residues Glu-540–Ser-553 and Ile-605–Pro-615.

It belongs to the RSC1 family. Component of the RSC complex composed of at least arp9, arp42, rsc1, rsc4, rsc7, rsc9, rsc58, sfh1, snf21, ssr1, ssr2, ssr3 and ssr4. The complex interacts with histone and histone variant components of centromeric chromatin.

Its subcellular location is the nucleus. In terms of biological role, component of the chromatin structure remodeling complex (RSC), which is involved in transcription regulation and nucleosome positioning. Controls particularly membrane and organelle development genes. The chain is Chromatin structure-remodeling complex subunit rsc1 (rsc1) from Schizosaccharomyces pombe (strain 972 / ATCC 24843) (Fission yeast).